Here is a 138-residue protein sequence, read N- to C-terminus: Large ribosomal subunit protein bL19 (138 aa).

This sequence belongs to the bacterial ribosomal protein bL19 family.

Its function is as follows. This protein is located at the 30S-50S ribosomal subunit interface and may play a role in the structure and function of the aminoacyl-tRNA binding site. The sequence is that of Large ribosomal subunit protein bL19 from Rickettsia rickettsii (strain Iowa).